The primary structure comprises 303 residues: uncharacterized protein (303 aa).

6 consecutive transmembrane segments (helical) span residues 12 to 32 (GLPI…SGIL), 81 to 101 (ISSV…VLEF), 117 to 137 (ALAG…FDVI), 174 to 194 (CIAM…TCMS), 208 to 228 (IISG…LDVV), and 265 to 286 (FFKG…SWAA). Solcar repeat units lie at residues 17-105 (SPMY…FKSK), 111-195 (DRPL…CMSF), and 206-293 (SHII…GKEI).

It belongs to the mitochondrial carrier (TC 2.A.29) family.

It is found in the mitochondrion inner membrane. This is an uncharacterized protein from Schizosaccharomyces pombe (strain 972 / ATCC 24843) (Fission yeast).